Consider the following 197-residue polypeptide: uncharacterized protein (197 aa).

The segment covering 168-185 has biased composition (basic and acidic residues); that stretch reads QRDDFSEDSHANDPKLVG. The segment at 168–197 is disordered; the sequence is QRDDFSEDSHANDPKLVGDDYVPQAPEQIN.

This is an uncharacterized protein from Escherichia coli (strain K12).